Reading from the N-terminus, the 264-residue chain is Tryptophan synthase alpha chain (264 aa).

Active-site proton acceptor residues include Glu49 and Asp60.

Belongs to the TrpA family. As to quaternary structure, tetramer of two alpha and two beta chains.

It catalyses the reaction (1S,2R)-1-C-(indol-3-yl)glycerol 3-phosphate + L-serine = D-glyceraldehyde 3-phosphate + L-tryptophan + H2O. The protein operates within amino-acid biosynthesis; L-tryptophan biosynthesis; L-tryptophan from chorismate: step 5/5. In terms of biological role, the alpha subunit is responsible for the aldol cleavage of indoleglycerol phosphate to indole and glyceraldehyde 3-phosphate. In Lachnospira eligens (strain ATCC 27750 / DSM 3376 / VPI C15-48 / C15-B4) (Eubacterium eligens), this protein is Tryptophan synthase alpha chain.